A 120-amino-acid polypeptide reads, in one-letter code: Cell cycle protein GpsB (120 aa).

Residues 32-68 (LDDIIKDYETYAALVKELREENRRLKEELAAKPVEKA) adopt a coiled-coil conformation. The disordered stretch occupies residues 63-88 (KPVEKAPVQPTQPVQSTQATQSTVES). A compositionally biased stretch (low complexity) spans 68–86 (APVQPTQPVQSTQATQSTV).

Belongs to the GpsB family. Forms polymers through the coiled coil domains. Interacts with PBP1, MreC and EzrA.

The protein localises to the cytoplasm. In terms of biological role, divisome component that associates with the complex late in its assembly, after the Z-ring is formed, and is dependent on DivIC and PBP2B for its recruitment to the divisome. Together with EzrA, is a key component of the system that regulates PBP1 localization during cell cycle progression. Its main role could be the removal of PBP1 from the cell pole after pole maturation is completed. Also contributes to the recruitment of PBP1 to the division complex. Not essential for septum formation. The chain is Cell cycle protein GpsB from Streptococcus sanguinis (strain SK36).